The chain runs to 333 residues: Holliday junction branch migration complex subunit RuvB (333 aa).

Positions 1-182 (MDERLLSGES…FGVLSRLEYY (182 aa)) are large ATPase domain (RuvB-L). Residues Leu21, Arg22, Gly63, Lys66, Thr67, Thr68, 129–131 (EDF), Arg172, Tyr182, and Arg219 contribute to the ATP site. Thr67 is a Mg(2+) binding site. Positions 183–253 (TVDQLSAIVE…ITQMALELLQ (71 aa)) are small ATPAse domain (RuvB-S). The tract at residues 256–333 (KLGLDHIDHK…QHFGMEMPKI (78 aa)) is head domain (RuvB-H). 2 residues coordinate DNA: Arg311 and Arg316.

It belongs to the RuvB family. Homohexamer. Forms an RuvA(8)-RuvB(12)-Holliday junction (HJ) complex. HJ DNA is sandwiched between 2 RuvA tetramers; dsDNA enters through RuvA and exits via RuvB. An RuvB hexamer assembles on each DNA strand where it exits the tetramer. Each RuvB hexamer is contacted by two RuvA subunits (via domain III) on 2 adjacent RuvB subunits; this complex drives branch migration. In the full resolvosome a probable DNA-RuvA(4)-RuvB(12)-RuvC(2) complex forms which resolves the HJ.

The protein resides in the cytoplasm. It carries out the reaction ATP + H2O = ADP + phosphate + H(+). In terms of biological role, the RuvA-RuvB-RuvC complex processes Holliday junction (HJ) DNA during genetic recombination and DNA repair, while the RuvA-RuvB complex plays an important role in the rescue of blocked DNA replication forks via replication fork reversal (RFR). RuvA specifically binds to HJ cruciform DNA, conferring on it an open structure. The RuvB hexamer acts as an ATP-dependent pump, pulling dsDNA into and through the RuvAB complex. RuvB forms 2 homohexamers on either side of HJ DNA bound by 1 or 2 RuvA tetramers; 4 subunits per hexamer contact DNA at a time. Coordinated motions by a converter formed by DNA-disengaged RuvB subunits stimulates ATP hydrolysis and nucleotide exchange. Immobilization of the converter enables RuvB to convert the ATP-contained energy into a lever motion, pulling 2 nucleotides of DNA out of the RuvA tetramer per ATP hydrolyzed, thus driving DNA branch migration. The RuvB motors rotate together with the DNA substrate, which together with the progressing nucleotide cycle form the mechanistic basis for DNA recombination by continuous HJ branch migration. Branch migration allows RuvC to scan DNA until it finds its consensus sequence, where it cleaves and resolves cruciform DNA. This chain is Holliday junction branch migration complex subunit RuvB, found in Bacillus cytotoxicus (strain DSM 22905 / CIP 110041 / 391-98 / NVH 391-98).